The following is a 565-amino-acid chain: Probable transcription factor lepB (565 aa).

Residues 52-259 (KRYAEDVTYL…PRNLDDRDLD (208 aa)) are fungal specific transcription factor domain.

It localises to the nucleus. In terms of biological role, probable transcription factor; part of the gene cluster 23 that mediates the biosynthesis of a family of 2-pyridones known as leporins. The sequence is that of Probable transcription factor lepB from Aspergillus flavus (strain ATCC 200026 / FGSC A1120 / IAM 13836 / NRRL 3357 / JCM 12722 / SRRC 167).